A 2422-amino-acid polypeptide reads, in one-letter code: Non-reducing polyketide synthase trt4 (2422 aa).

Residues 14-196 form an N-terminal acylcarrier protein transacylase domain (SAT) region; the sequence is VLFGPKCPKT…HHSDHTSVVQ (183 aa). The tract at residues 289–314 is disordered; the sequence is VEPPDSHHNTNTTQDSDVTTNASPLT. Positions 297–312 are enriched in polar residues; sequence NTNTTQDSDVTTNASP. The Ketosynthase family 3 (KS3) domain occupies 329-745; it reads TVPIAVTGMA…GSNAAIVLQE (417 aa). Catalysis depends on for beta-ketoacyl synthase activity residues Cys-494, His-629, and His-668. Residues 856–1121 form a malonyl-CoA:ACP transacylase (MAT) domain region; it reads LCFGGQTGNT…CPIDLSGPQA (266 aa). Residue Ser-904 is the For acyl/malonyl transferase activity of the active site. An N-terminal hotdog fold region spans residues 1190–1316; it reads PSLVKLLNND…GKISISSEAN (127 aa). Positions 1190 to 1495 constitute a PKS/mFAS DH domain; that stretch reads PSLVKLLNND…FTCVSIQSLK (306 aa). The interval 1191–1494 is product template (PT) domain; that stretch reads SLVKLLNNDG…TFTCVSIQSL (304 aa). The active-site Proton acceptor; for dehydratase activity is His-1221. A C-terminal hotdog fold region spans residues 1345–1495; sequence SSGLKRSTVY…FTCVSIQSLK (151 aa). Asp-1402 functions as the Proton donor; for dehydratase activity in the catalytic mechanism. In terms of domain architecture, Carrier spans 1535-1612; sequence SRSEDGLRVV…GLVQRIFPGG (78 aa). An O-(pantetheine 4'-phosphoryl)serine modification is found at Ser-1572. The disordered stretch occupies residues 1615–1636; it reads AHVETHSQPPDKIGITTGDRMP. A methyltransferase (CMeT) domain region spans residues 1774–2007; it reads QHASEHKLLH…GFNWVDWTDN (234 aa). The thioesterase (TE) domain stretch occupies residues 2036 to 2383; it reads NAVAEETLVY…LAPHIPTDEY (348 aa). Catalysis depends on for thioesterase activity residues Ser-2159, Asp-2320, and His-2352.

The enzyme catalyses 3 malonyl-CoA + acetyl-CoA + 2 S-adenosyl-L-methionine = 3,5-dimethylorsellinate + 2 S-adenosyl-L-homocysteine + 3 CO2 + 4 CoA. It participates in secondary metabolite biosynthesis; terpenoid biosynthesis. Functionally, non-reducing polyketide synthase; part of the gene cluster that mediates the biosynthesis of terretonin, a fungal meroterpenoid that acts as a mycotoxin. The first step of the pathway is the synthesis of 3,5-dimethylorsellinic acid (DMOA) by the polyketide synthase trt4. DMOA is then prenylated into farnesyl-DMOA by the polyprenyl transferase trt2. Methylation by the methyltransferase trt5 then leads to farnesyl-DMOA methyl ester which is further subject to epoxidation by the FAD-dependent monooxygenase trt8 to yield epoxyfarnesyl-DMOA methyl ester. Cyclization of epoxyfarnesyl-DMOA methyl ester by the terpene cyclase trt1 leads to a tetracycle intermediate which is in turn converted to preterretonin. Dehydrogenase trt9 comes next to transform preterretonin to preterrenoid. The FAD-dependent monooxygenase trt3 is then required for the C-hydroxylation at C16 of preterrenoid to yield terrenoid. The cytochrome P450 trt6 catalyzes three successive oxidations to transform terrenoid into an unstable intermediate, which then undergoes the D-ring expansion and unusual rearrangement of the methoxy group to afford the core skeleton of terretonin. Trt14 catalyzes the D-ring expansion of terretonin involving intramolecular methoxy rearrangement as well as the hydrolysis of the expanded D-ring and the methyl ester moiety. Finally, the nonheme iron-dependent dioxygenase trt7 accomplishes the last two oxidation reactions steps to complete the biosynthesis of terretonin. Terretonin C is produced via spontaneous decarboxylation of the terretonin precursor. Another shunt product of the terretonin biosynthesis is dihydrofarnesyl-DMOA, derived from epoxyfarnesyl-DMOA through hydrolysis of the epoxide. This Aspergillus terreus (strain NIH 2624 / FGSC A1156) protein is Non-reducing polyketide synthase trt4.